The sequence spans 283 residues: Spore coat polysaccharide biosynthesis protein SpsK (283 aa).

It belongs to the dTDP-4-dehydrorhamnose reductase family.

Its pathway is spore coat biogenesis; spore coat polysaccharide biosynthesis. The polypeptide is Spore coat polysaccharide biosynthesis protein SpsK (spsK) (Bacillus subtilis (strain 168)).